The sequence spans 333 residues: Quinolinate synthase (333 aa).

His-41 and Ser-58 together coordinate iminosuccinate. A [4Fe-4S] cluster-binding site is contributed by Cys-103. Iminosuccinate-binding positions include 129–131 (YIN) and Ser-146. Cys-189 contributes to the [4Fe-4S] cluster binding site. Residues 215–217 (HPE) and Thr-232 each bind iminosuccinate. Residue Cys-282 participates in [4Fe-4S] cluster binding.

This sequence belongs to the quinolinate synthase family. Type 2 subfamily. [4Fe-4S] cluster serves as cofactor.

It is found in the cytoplasm. The catalysed reaction is iminosuccinate + dihydroxyacetone phosphate = quinolinate + phosphate + 2 H2O + H(+). The protein operates within cofactor biosynthesis; NAD(+) biosynthesis; quinolinate from iminoaspartate: step 1/1. Functionally, catalyzes the condensation of iminoaspartate with dihydroxyacetone phosphate to form quinolinate. The sequence is that of Quinolinate synthase from Prochlorococcus marinus (strain MIT 9313).